Reading from the N-terminus, the 1052-residue chain is Membrane-bound transcription factor site-1 protease (1052 aa).

The first 17 residues, 1–17 (MKLINIWLLLLVVLLCG), serve as a signal peptide directing secretion. A propeptide spanning residues 18-186 (KKHLGDRLGK…TGRHSSRRLL (169 aa)) is cleaved from the precursor. N-linked (GlcNAc...) asparagine glycosylation is present at asparagine 148. Serine 168 is modified (phosphoserine). Residues 187 to 999 (RAIPRQVAQT…MPGRYNQEVG (813 aa)) lie on the Lumenal side of the membrane. The region spanning 190-472 (PRQVAQTLQA…HGKLDLLRAY (283 aa)) is the Peptidase S8 domain. Residue aspartate 218 is the Charge relay system of the active site. The N-linked (GlcNAc...) asparagine glycan is linked to asparagine 236. The active-site Charge relay system is histidine 249. Asparagine 305 is a glycosylation site (N-linked (GlcNAc...) asparagine). Serine 414 functions as the Charge relay system in the catalytic mechanism. Asparagine 515 and asparagine 728 each carry an N-linked (GlcNAc...) asparagine glycan. Residues 877–887 (PSLSHSGNRQR) are compositionally biased toward polar residues. The segment at 877–900 (PSLSHSGNRQRPPSGAGLAPPERM) is disordered. Asparagine 939 carries N-linked (GlcNAc...) asparagine glycosylation. A helical transmembrane segment spans residues 1000 to 1022 (QTIPVFAFLGAMVALAFFVVQIS). Residues 1023 to 1052 (KAKSRPKRRRPRAKRPQLTQQTHPPRTPSV) are Cytoplasmic-facing. The segment covering 1025-1037 (KSRPKRRRPRAKR) has biased composition (basic residues). The tract at residues 1025 to 1052 (KSRPKRRRPRAKRPQLTQQTHPPRTPSV) is disordered.

This sequence belongs to the peptidase S8 family. Ca(2+) serves as cofactor. Post-translationally, the 148 kDa zymogen is processed progressively into two membrane-bound 120 and 106 kDa forms in the endoplasmic reticulum, and late into a secreted 98 kDa form. The propeptide is autocatalytically removed through an intramolecular cleavage after Leu-186. Further cleavage generates 14, 10, and 8 kDa intermediates.

The protein resides in the endoplasmic reticulum membrane. The protein localises to the golgi apparatus membrane. The catalysed reaction is Processes precursors containing basic and hydrophobic/aliphatic residues at P4 and P2, respectively, with a relatively relaxed acceptance of amino acids at P1 and P3.. Its activity is regulated as follows. Inhibited by divalent copper and zinc ions, but not by nickel or cobalt. Inhibited by its prosegment, but not smaller fragments. Inhibited by 4-(2-aminoethyl)benzenesulfonyl fluoride (AEBSF), a serine protease inhibitor. In terms of biological role, serine protease that cleaves after hydrophobic or small residues, provided that Arg or Lys is in position P4: known substrates include SREBF1/SREBP1, SREBF2/SREBP2, BDNF, GNPTAB, ATF6, ATF6B and FAM20C. Cleaves substrates after Arg-Ser-Val-Leu (SREBP2), Arg-His-Leu-Leu (ATF6), Arg-Gly-Leu-Thr (BDNF) and its own propeptide after Arg-Arg-Leu-Leu. Catalyzes the first step in the proteolytic activation of the sterol regulatory element-binding proteins (SREBPs) SREBF1/SREBP1 and SREBF2/SREBP2. Also mediates the first step in the proteolytic activation of the cyclic AMP-dependent transcription factor ATF-6 (ATF6 and ATF6B). Mediates the protein cleavage of GNPTAB into subunit alpha and beta, thereby participating in biogenesis of lysosomes. Cleaves the propeptide from FAM20C which is required for FAM20C secretion from the Golgi apparatus membrane and for enhancement of FAM20C kinase activity, promoting osteoblast differentiation and biomineralization. Involved in the regulation of M6P-dependent Golgi-to-lysosome trafficking of lysosomal enzymes. It is required for the activation of CREB3L2/BBF2H7, a transcriptional activator of MIA3/TANGO and other genes controlling mega vesicle formation. Therefore, it plays a key role in the regulation of mega vesicle-mediated collagen trafficking. In astrocytes and osteoblasts, upon DNA damage and ER stress, mediates the first step of the regulated intramembrane proteolytic activation of the transcription factor CREB3L1, leading to the inhibition of cell-cycle progression. This Cricetulus griseus (Chinese hamster) protein is Membrane-bound transcription factor site-1 protease.